Here is a 286-residue protein sequence, read N- to C-terminus: ATP synthase gamma chain (286 aa).

This sequence belongs to the ATPase gamma chain family. As to quaternary structure, F-type ATPases have 2 components, CF(1) - the catalytic core - and CF(0) - the membrane proton channel. CF(1) has five subunits: alpha(3), beta(3), gamma(1), delta(1), epsilon(1). CF(0) has three main subunits: a, b and c.

Its subcellular location is the cell membrane. In terms of biological role, produces ATP from ADP in the presence of a proton gradient across the membrane. The gamma chain is believed to be important in regulating ATPase activity and the flow of protons through the CF(0) complex. This chain is ATP synthase gamma chain, found in Ruminococcus albus (strain ATCC 27210 / DSM 20455 / JCM 14654 / NCDO 2250 / 7).